A 208-amino-acid polypeptide reads, in one-letter code: Putative 3-methyladenine DNA glycosylase (208 aa).

This sequence belongs to the DNA glycosylase MPG family.

The polypeptide is Putative 3-methyladenine DNA glycosylase (Lactobacillus delbrueckii subsp. bulgaricus (strain ATCC BAA-365 / Lb-18)).